Reading from the N-terminus, the 831-residue chain is Maltodextrin phosphorylase (831 aa).

N6-(pyridoxal phosphate)lysine is present on Lys592.

It belongs to the glycogen phosphorylase family. As to quaternary structure, trimer (at 25 degrees Celsius). It depends on pyridoxal 5'-phosphate as a cofactor.

The enzyme catalyses [(1-&gt;4)-alpha-D-glucosyl](n) + phosphate = [(1-&gt;4)-alpha-D-glucosyl](n-1) + alpha-D-glucose 1-phosphate. Phosphorylase is an important allosteric enzyme in carbohydrate metabolism. Catalyzes the phospholytic cleavage of maltodextrins with a minimal chain length of five glucose residues to yield glucose-1-phosphate. Low activity with tetraose and no activity with triose and maltose. Long maltodextrins (8 to 15 glucose units), amylose and starch are not as good substrates as maltoheptaose. The sequence is that of Maltodextrin phosphorylase (malP) from Thermococcus litoralis (strain ATCC 51850 / DSM 5473 / JCM 8560 / NS-C).